Consider the following 234-residue polypeptide: R-spondin-4 (234 aa).

An N-terminal signal peptide occupies residues 1–19; it reads MRAPLCLLLLVAHAVDMLA. Asparagine 34 carries N-linked (GlcNAc...) asparagine glycosylation. Intrachain disulfides connect cysteine 35–cysteine 41, cysteine 38–cysteine 47, cysteine 50–cysteine 69, cysteine 73–cysteine 88, cysteine 91–cysteine 98, cysteine 95–cysteine 104, cysteine 107–cysteine 118, cysteine 122–cysteine 135, cysteine 139–cysteine 181, cysteine 150–cysteine 157, and cysteine 190–cysteine 196. One copy of the FU repeat lies at 85–128; the sequence is VNRCKKCGATCESCFSQDFCIRCKRQFYLYKGKCLPTCPPGTLA. The TSP type-1 domain maps to 138 to 197; that stretch reads ECELGPWGGWSPCTHNGKTCGSAWGLESRVREAGRAGHEEAATCQVLSESRKCPIQRPCP. The tract at residues 190-234 is disordered; sequence CPIQRPCPGERSPGQKKGRKDRRPRKDRKLDRRLDVRPRQPGLQP. The span at 203 to 216 shows a compositional bias: basic residues; sequence GQKKGRKDRRPRKD. A compositionally biased stretch (basic and acidic residues) spans 217 to 227; sequence RKLDRRLDVRP.

It belongs to the R-spondin family. In terms of assembly, binds heparin. Interacts with LGR4, LGR5 and LGR6. Post-translationally, tyr-112 may be phosphorylated; however as this position is probably extracellular, the vivo relevance is not proven.

It localises to the secreted. Its function is as follows. Activator of the canonical Wnt signaling pathway by acting as a ligand for LGR4-6 receptors. Upon binding to LGR4-6 (LGR4, LGR5 or LGR6), LGR4-6 associate with phosphorylated LRP6 and frizzled receptors that are activated by extracellular Wnt receptors, triggering the canonical Wnt signaling pathway to increase expression of target genes. Also regulates the canonical Wnt/beta-catenin-dependent pathway and non-canonical Wnt signaling by acting as an inhibitor of ZNRF3, an important regulator of the Wnt signaling pathway. The protein is R-spondin-4 (RSPO4) of Homo sapiens (Human).